The sequence spans 133 residues: Fluoride-specific ion channel FluC (133 aa).

Transmembrane regions (helical) follow at residues 12–32 (LAMTGGALGSGLRFAIGASLI), 41–61 (WGTLTVNLLGSFVAGVLLVWL), 76–96 (IVGVIGGLTTFSSLMMECLVF), and 104–124 (MIGIYLAVTLLAGLALVFAGA). Residues Gly81 and Thr84 each coordinate Na(+).

Belongs to the fluoride channel Fluc/FEX (TC 1.A.43) family.

It localises to the cell inner membrane. The enzyme catalyses fluoride(in) = fluoride(out). With respect to regulation, na(+) is not transported, but it plays an essential structural role and its presence is essential for fluoride channel function. Functionally, fluoride-specific ion channel. Important for reducing fluoride concentration in the cell, thus reducing its toxicity. The polypeptide is Fluoride-specific ion channel FluC (Xanthomonas axonopodis pv. citri (strain 306)).